A 359-amino-acid chain; its full sequence is Probable RNA methyltransferase RPD_2859 (359 aa).

The active-site Proton acceptor is E99. The region spanning 105–330 (RFDGHTACIS…PVVVRDTQGR (226 aa)) is the Radical SAM core domain. The cysteines at positions 112 and 336 are disulfide-linked. [4Fe-4S] cluster contacts are provided by C119, C123, and C126. S-adenosyl-L-methionine contacts are provided by residues 162-163 (GE), S194, 217-219 (SLH), and N293. Catalysis depends on C336, which acts as the S-methylcysteine intermediate.

It belongs to the radical SAM superfamily. RlmN family. [4Fe-4S] cluster serves as cofactor.

It localises to the cytoplasm. This is Probable RNA methyltransferase RPD_2859 from Rhodopseudomonas palustris (strain BisB5).